Reading from the N-terminus, the 436-residue chain is Hydrogenobyrinate a,c-diamide synthase (436 aa).

Residues 244-435 (RIAVARDDAF…MHVIDFSGEA (192 aa)) enclose the GATase cobBQ-type domain. C327 acts as the Nucleophile in catalysis.

The protein belongs to the CobB/CbiA family. The cofactor is Mg(2+).

The catalysed reaction is hydrogenobyrinate + 2 L-glutamine + 2 ATP + 2 H2O = hydrogenobyrinate a,c-diamide + 2 L-glutamate + 2 ADP + 2 phosphate + 2 H(+). The protein operates within cofactor biosynthesis; adenosylcobalamin biosynthesis; cob(II)yrinate a,c-diamide from precorrin-2 (aerobic route): step 9/10. Functionally, catalyzes the ATP-dependent amidation of the two carboxylate groups at positions a and c of hydrogenobyrinate, using either L-glutamine or ammonia as the nitrogen source. The chain is Hydrogenobyrinate a,c-diamide synthase from Brucella abortus biovar 1 (strain 9-941).